The chain runs to 525 residues: Rho guanine nucleotide exchange factor gef3 (525 aa).

In terms of domain architecture, DH spans 72 to 268; that stretch reads AIISVLEEFR…EIASQRMNEL (197 aa).

The protein localises to the cytoplasm. In terms of biological role, has a role in the control of cell polarity and cytokinesis. Involved in bipolar growth and septum formation. The protein is Rho guanine nucleotide exchange factor gef3 (gef3) of Schizosaccharomyces pombe (strain 972 / ATCC 24843) (Fission yeast).